Reading from the N-terminus, the 121-residue chain is Amelogenin (121 aa).

The tract at residues 1–121 (LHHQIIPVLS…DLPLEPWPAS (121 aa)) is disordered. Polar residues-rich tracts occupy residues 10–19 (SQHQTPTHAL) and 47–59 (HSVT…QSNL). Residues 60-84 (PQPGQQPFQPQFPQKPTHRPIQPQA) are compositionally biased toward low complexity. Positions 85–121 (PVHPMPPMPQPQLPPMFPLQPLPPLLPDLPLEPWPAS) are enriched in pro residues.

It belongs to the amelogenin family.

The protein resides in the secreted. The protein localises to the extracellular space. It is found in the extracellular matrix. Functionally, plays a role in the biomineralization of teeth. Seems to regulate the formation of crystallites during the secretory stage of tooth enamel development. Thought to play a major role in the structural organization and mineralization of developing enamel. The chain is Amelogenin (AMEL) from Tachyglossus aculeatus aculeatus (Southeast Australian short-beaked echidna).